A 557-amino-acid chain; its full sequence is Coiled-coil domain-containing protein 22 homolog (557 aa).

Coiled-coil stretches lie at residues 260 to 350 and 489 to 554; these read RLGQ…LQSQ and ELTA…AGRN.

This sequence belongs to the CCDC22 family.

This is Coiled-coil domain-containing protein 22 homolog from Anopheles gambiae (African malaria mosquito).